Consider the following 991-residue polypeptide: Integrator complex subunit 10-like protein (991 aa).

Disordered stretches follow at residues 180 to 217 (NNNNNNNNNNNNNNNNKNNSNNNNKNNNNNNDDSNNNN), 310 to 345 (YFDEDDYDQKQQQQQQQQQQQQEQKGSKEDEEDIEK), 462 to 484 (NDYFDRNSEGNGGDENDENSQES), 549 to 614 (NSSS…GQQP), and 961 to 991 (EKQYSSSNTANNSGVNNSPIHNQNTDVEMNE). Residues 319–333 (KQQQQQQQQQQQQEQ) show a composition bias toward low complexity. A compositionally biased stretch (acidic residues) spans 473–484 (GGDENDENSQES). Over residues 549–609 (NSSSGSNGII…NNNNNNNNNN (61 aa)) the composition is skewed to low complexity. The span at 964 to 991 (YSSSNTANNSGVNNSPIHNQNTDVEMNE) shows a compositional bias: polar residues.

The protein resides in the nucleus. In terms of biological role, may be a component of the Integrator complex, a complex involved in the small nuclear RNAs (snRNA) U1 and U2 transcription and in their 3'-box-dependent processing. The polypeptide is Integrator complex subunit 10-like protein (Dictyostelium discoideum (Social amoeba)).